The chain runs to 738 residues: LPS-assembly protein LptD (738 aa).

The signal sequence occupies residues 1-26 (MEHKRNNILLAGLFFLLLGLVSIARA).

It belongs to the LptD family. In terms of assembly, component of the lipopolysaccharide transport and assembly complex. Interacts with LptE and LptA.

The protein resides in the cell outer membrane. Together with LptE, is involved in the assembly of lipopolysaccharide (LPS) at the surface of the outer membrane. This is LPS-assembly protein LptD from Nitrosococcus oceani (strain ATCC 19707 / BCRC 17464 / JCM 30415 / NCIMB 11848 / C-107).